The following is a 99-amino-acid chain: MANMFLMFYLSMIMFLFGCMVFVSNRKHLLSTLLSLEYMVLSLFIFLFFYLNFMNYEMYFSMFFLTFCVCEGVLGLSILVSMIRTHGNDYFQSFSILQC.

The next 3 helical transmembrane spans lie at 4–24 (MFLM…VFVS), 29–49 (LLST…FLFF), and 63–83 (FFLT…VSMI).

Belongs to the complex I subunit 4L family.

It is found in the mitochondrion membrane. It carries out the reaction a ubiquinone + NADH + 5 H(+)(in) = a ubiquinol + NAD(+) + 4 H(+)(out). Functionally, core subunit of the mitochondrial membrane respiratory chain NADH dehydrogenase (Complex I) that is believed to belong to the minimal assembly required for catalysis. Complex I functions in the transfer of electrons from NADH to the respiratory chain. The immediate electron acceptor for the enzyme is believed to be ubiquinone. This is NADH-ubiquinone oxidoreductase chain 4L (ND4L) from Anopheles quadrimaculatus (Common malaria mosquito).